We begin with the raw amino-acid sequence, 487 residues long: Sorting nexin-4 (487 aa).

The interval 1–59 is disordered; sequence MDHDDFDSVSWRHGPDSDISRPTTSGTDTAESPETRRDPNGKRRMSSASEIPQAGPHAD. Positions 20–32 are enriched in polar residues; sequence SRPTTSGTDTAES. Residues 70–192 enclose the PX domain; it reads VLECRVDTPI…IFLESPDWNA (123 aa). Residues Arg113, Thr115, Lys139, and Arg158 each contribute to the a 1,2-diacyl-sn-glycero-3-phospho-(1D-myo-inositol-3-phosphate) site. A coiled-coil region spans residues 395–430; the sequence is EQSRRERMRKLELRIDELTREVESAKTTSEMFDEEV.

The protein belongs to the sorting nexin family.

The protein resides in the cytoplasm. Its subcellular location is the cytosol. The protein localises to the preautophagosomal structure membrane. It is found in the endosome membrane. Its function is as follows. Sorting nexin, involved in the separation or division of vacuoles throughout the entire life cycle of the cells. Involved in retrieval of late-Golgi SNAREs from post-Golgi endosomes to the trans-Golgi network, for cytoplasm to vacuole transport (Cvt), and autophagy of large cargos including mitophagy, pexophagy and glycophagy. In Emericella nidulans (strain FGSC A4 / ATCC 38163 / CBS 112.46 / NRRL 194 / M139) (Aspergillus nidulans), this protein is Sorting nexin-4 (snx4).